Here is a 465-residue protein sequence, read N- to C-terminus: Asparagine--tRNA ligase (465 aa).

It belongs to the class-II aminoacyl-tRNA synthetase family. As to quaternary structure, homodimer.

The protein resides in the cytoplasm. It catalyses the reaction tRNA(Asn) + L-asparagine + ATP = L-asparaginyl-tRNA(Asn) + AMP + diphosphate + H(+). The polypeptide is Asparagine--tRNA ligase (Pseudoalteromonas atlantica (strain T6c / ATCC BAA-1087)).